The sequence spans 129 residues: DNA-directed RNA polymerase III subunit rpc9 (129 aa).

This sequence belongs to the eukaryotic RPC9 RNA polymerase subunit family. As to quaternary structure, component of the RNA polymerase III (Pol III) complex.

It is found in the cytoplasm. The protein resides in the nucleus. Functionally, DNA-dependent RNA polymerase catalyzes the transcription of DNA into RNA using the four ribonucleoside triphosphates as substrates. Specific peripheric component of RNA polymerase III which synthesizes small RNAs, such as 5S rRNA and tRNAs. The sequence is that of DNA-directed RNA polymerase III subunit rpc9 (rpc17) from Schizosaccharomyces pombe (strain 972 / ATCC 24843) (Fission yeast).